A 1630-amino-acid chain; its full sequence is Histone transcription regulator 3 homolog (1630 aa).

The TPR 1 repeat unit spans residues 8–42 (NAASEDLDKEKRTLEIRIEEAVQIYQNALSAQKQG). Residues 325–347 (KDIVPPPSDNLPKPQLLKRPIDD) form a disordered region. A TPR 2 repeat occupies 1230–1263 (WRALYMLGKACRKCGDMENALVHFEAAAALAPTK).

Belongs to the HIR3 family. In terms of assembly, interacts with hip1 and slm9.

The protein localises to the nucleus. Its function is as follows. Has a role in a nucleosome assembly pathway that is required for the integrity of heterochromatin and proper chromosome segregation. Required for transcriptional silencing in the outer repeat (otr) region of centromeric repeats and the Tf2 long terminal repeat retrotransposons. The polypeptide is Histone transcription regulator 3 homolog (hip3) (Schizosaccharomyces pombe (strain 972 / ATCC 24843) (Fission yeast)).